The following is a 157-amino-acid chain: 3-dehydroquinate dehydratase (157 aa).

Tyr-24 acts as the Proton acceptor in catalysis. Positions 75, 81, and 88 each coordinate substrate. His-101 serves as the catalytic Proton donor. Residues 102 to 103 and Arg-112 each bind substrate; that span reads LS.

This sequence belongs to the type-II 3-dehydroquinase family. As to quaternary structure, homododecamer.

It catalyses the reaction 3-dehydroquinate = 3-dehydroshikimate + H2O. It functions in the pathway metabolic intermediate biosynthesis; chorismate biosynthesis; chorismate from D-erythrose 4-phosphate and phosphoenolpyruvate: step 3/7. Its function is as follows. Catalyzes a trans-dehydration via an enolate intermediate. The chain is 3-dehydroquinate dehydratase from Brucella melitensis biotype 1 (strain ATCC 23456 / CCUG 17765 / NCTC 10094 / 16M).